We begin with the raw amino-acid sequence, 97 residues long: Co-chaperonin GroES (97 aa).

This sequence belongs to the GroES chaperonin family. In terms of assembly, heptamer of 7 subunits arranged in a ring. Interacts with the chaperonin GroEL.

It localises to the cytoplasm. Functionally, together with the chaperonin GroEL, plays an essential role in assisting protein folding. The GroEL-GroES system forms a nano-cage that allows encapsulation of the non-native substrate proteins and provides a physical environment optimized to promote and accelerate protein folding. GroES binds to the apical surface of the GroEL ring, thereby capping the opening of the GroEL channel. This is Co-chaperonin GroES from Escherichia fergusonii (strain ATCC 35469 / DSM 13698 / CCUG 18766 / IAM 14443 / JCM 21226 / LMG 7866 / NBRC 102419 / NCTC 12128 / CDC 0568-73).